A 148-amino-acid chain; its full sequence is Large ribosomal subunit protein bL9 (148 aa).

It belongs to the bacterial ribosomal protein bL9 family.

Functionally, binds to the 23S rRNA. This Chromohalobacter salexigens (strain ATCC BAA-138 / DSM 3043 / CIP 106854 / NCIMB 13768 / 1H11) protein is Large ribosomal subunit protein bL9.